The primary structure comprises 254 residues: Inner membrane protein YabI (254 aa).

At 1-7 (MQALLEH) the chain is on the periplasmic side. 2 consecutive transmembrane segments (helical) span residues 8–28 (FITQ…FLES) and 29–49 (LALV…GALI). Residues 50–58 (GSGELSFWH) are Periplasmic-facing. The helical transmembrane segment at 59 to 79 (AWLAGIIGCLMGDWISFWLGW) threads the bilayer. Over 80–144 (RFKKPLHRWS…LPVAKFITPN (65 aa)) the chain is Cytoplasmic. A helical membrane pass occupies residues 145 to 165 (IIGCLLWPPFYFLPGILAGAA). Over 166 to 178 (IDIPAGMQSGEFK) the chain is Periplasmic. The helical transmembrane segment at 179-199 (WLLLATAVFLWVGGWLCWRLW) threads the bilayer. Residues 200–215 (RSGKATDRLSHYLSRG) are Cytoplasmic-facing. A helical membrane pass occupies residues 216 to 236 (RLLWLTPLISAIGVVALVVLI). The Periplasmic segment spans residues 237–254 (RHPLMPVYIDILRKVVGV).

Belongs to the DedA family.

The protein resides in the cell inner membrane. The polypeptide is Inner membrane protein YabI (yabI) (Escherichia coli (strain K12)).